The sequence spans 692 residues: Glycine--tRNA ligase beta subunit (692 aa).

Belongs to the class-II aminoacyl-tRNA synthetase family. Tetramer of two alpha and two beta subunits.

It is found in the cytoplasm. It carries out the reaction tRNA(Gly) + glycine + ATP = glycyl-tRNA(Gly) + AMP + diphosphate. This chain is Glycine--tRNA ligase beta subunit, found in Oceanobacillus iheyensis (strain DSM 14371 / CIP 107618 / JCM 11309 / KCTC 3954 / HTE831).